The chain runs to 261 residues: RING finger protein 208 (261 aa).

Residues 83–106 (PALEGAPHTPPLPRRPRKGSSELG) are disordered. At Ser-102 the chain carries Phosphoserine. The segment at 143–190 (CPTCGHSYNVTQRRPRVLSCLHSVCEQCLQILYESCPKYKFISCPTCR) adopts an RING-type zinc-finger fold.

The chain is RING finger protein 208 (RNF208) from Homo sapiens (Human).